The chain runs to 35 residues: Photosystem II reaction center protein T (35 aa).

A helical transmembrane segment spans residues 3–23 (ALVYTFLLVSTLGIIFFAIFF).

This sequence belongs to the PsbT family. In terms of assembly, PSII is composed of 1 copy each of membrane proteins PsbA, PsbB, PsbC, PsbD, PsbE, PsbF, PsbH, PsbI, PsbJ, PsbK, PsbL, PsbM, PsbT, PsbY, PsbZ, Psb30/Ycf12, at least 3 peripheral proteins of the oxygen-evolving complex and a large number of cofactors. It forms dimeric complexes.

It localises to the plastid. The protein localises to the chloroplast thylakoid membrane. Its function is as follows. Found at the monomer-monomer interface of the photosystem II (PS II) dimer, plays a role in assembly and dimerization of PSII. PSII is a light-driven water plastoquinone oxidoreductase, using light energy to abstract electrons from H(2)O, generating a proton gradient subsequently used for ATP formation. The polypeptide is Photosystem II reaction center protein T (Gunnera chilensis (Chilean rhubarb)).